The sequence spans 175 residues: ADP-ribosylation factor 6 (175 aa).

Gly2 is lipidated: N-myristoyl glycine. Lys3 carries the N6-myristoyl lysine lipid modification. Residues 23 to 28 (AAGKTT), 41 to 44 (TIPT), 63 to 67 (DVGGQ), 122 to 125 (NKQD), and 155 to 156 (CA) each bind GTP.

This sequence belongs to the small GTPase superfamily. Arf family. In terms of assembly, interacts (when activated) with GGA1, GGA2 and GGA3; the interaction is required for proper subcellular location of GGA1, GGA2 and GGA3. Interacts with PIP5K1C. Interacts with USP6 (via Rab-GAP TBC domain). Interacts with RAB11FIP3 and RAB11FIP4. Interacts with HERC1. Interacts with ARHGAP21. Interacts with ASAP3; the interaction is stabilized by calcium ions. Interacts with NCS1/FREQ at the plasma membrane. Interacts with TBC1D24. Interacts with ECPAS. Interacts with MICALL1. Interacts with SPAG9 homodimers, forming heterotetramers. Interacts with CYTH3. Interacts with ASAP2. Interacts with UACA. Interacts with KIF23, forming heterodimers and heterotetramers. Interacts with C9orf72. Interacts (GTP-bound form) with TJAP1/PILT. Interacts with PRKAA2. Interacts with CD36 (when palmitoylated); this interaction mediates CD36 transport from the Golgi to the plasma membrane. Interacts with APBB1. (Microbial infection) Interacts with the V.cholerae enterotoxin subunit A1; this causes a conformation change so that the toxin can bind NAD and catalyze the ADP-ribosylation of Gs alpha. As to quaternary structure, (Microbial infection) Interacts with EspG from enteropathogenic E.coli. In terms of assembly, (Microbial infection) Identified in a complex with RAB1A and EspG from enteropathogenic E.coli. (Microbial infection) Interacts with human enterovirus 71 protein VP1. GTP-bound form is myristoylated on Lys-3 by NMT1 and NMT2, allowing ARF6 to remain on membranes during the GTPase cycle, thereby promoting its activity. GDP-bound inactive form is demyristoylated on Lys-3 by SIRT2 at early endosomes or endocytic recycling compartment to allow its efficient activation by a guanine exchange factor (GEF) after GDP release. In terms of tissue distribution, ubiquitous, with higher levels in heart, substantia nigra, and kidney.

It localises to the cytoplasm. It is found in the cytosol. The protein localises to the cell membrane. Its subcellular location is the endosome membrane. The protein resides in the recycling endosome membrane. It localises to the cell projection. It is found in the filopodium membrane. The protein localises to the ruffle. Its subcellular location is the cleavage furrow. The protein resides in the midbody. It localises to the midbody ring. It is found in the early endosome membrane. The protein localises to the golgi apparatus. Its subcellular location is the trans-Golgi network membrane. The enzyme catalyses GTP + H2O = GDP + phosphate + H(+). Activation is generally mediated by a guanine exchange factor (GEF), while inactivation through hydrolysis of bound GTP is catalyzed by a GTPase activating protein (GAP). Activated by ASAP3. Inactivated by ACAP1 and ACAP2. Activated by NGF via NTRK1. Activated by PRKAA2 through its C-terminal regulatory domain. Functionally, GTP-binding protein involved in protein trafficking that regulates endocytic recycling and cytoskeleton remodeling. GTP-bound form plays an important role in the transport of multiple palmitoylated proteins form the Golgi to the plasma membrane. Required for normal completion of mitotic cytokinesis. Plays a role in the reorganization of the actin cytoskeleton and the formation of stress fibers. Involved in the regulation of dendritic spine development, contributing to the regulation of dendritic branching and filopodia extension. Potentiates the neurite outgrowth in primary neurons by interacting with the molecular adapter APBB1. Plays an important role in membrane trafficking, during junctional remodeling and epithelial polarization. Regulates surface levels of adherens junction proteins such as CDH1. Required for NTRK1 sorting to the recycling pathway from early endosomes. In terms of biological role, (Microbial infection) Functions as an allosteric activator of the cholera toxin catalytic subunit, an ADP-ribosyltransferase. (Microbial infection) Plays a key role in the endocytosis of enterovirus 71 and thus viral entry into brain microvascular endothelial cells. The chain is ADP-ribosylation factor 6 from Homo sapiens (Human).